Consider the following 622-residue polypeptide: MRRAVSKILPTPKLFNDSAHFHSNFRLEYNSVDDFYVQLDNPHKVWLPGEEISGQVVLISKKNLANIVITLSLVGFIKINASSHSKLRPLKHTLFDYTIKIYGKDEEEQTDSAEFSNGLLKGEHVFPFIVKLPNKRVYTSIDFGKGSINYILKAAIGNSSSYVIPASPDNASTSSLTKKKILQNPSHTSEKVISLVNPIDVSLLPRPKPKRLILKDPRTSSNKKLSRTQTSTSTINTMSSNEHDHSLPEGATPEDSDHKSLKSIPVPTIKAILEVPQRGYLRGESIPIKLSINHLRKIQDFNGIIITFVRVCRLDNGPDGVVESFRKDLQQLILPLYVDPVTFQSEINSSLRVPADAFPTILGCPLVSFQYFVEVLINLSGKSIALDSDVDARAKANPQATKSSSDKFKFNFDSTQTERSTYINTDSYKRSKKFLQLTTEIYIGTHRSSTQEEQAPQAEEVASRRSSSMASNSNSSPAVFSTSSPHSPVEHQYAGAINSIPESVAVSNFTPPYENVVPSYVPPEFVSHLQNQSELSEKERMRQHESSLLPSAPPDDEQPSPVNMTSNQQPFSFFTYQNTNTSPPVPLDDDLYQEPVDSAPNYLNVNNDRLIVPQDNNSNSET.

Disordered regions lie at residues 210–261 (KRLI…HKSL), 445–489 (THRS…HSPV), and 529–622 (LQNQ…NSET). 2 stretches are compositionally biased toward low complexity: residues 227–240 (RTQT…TMSS) and 451–476 (QEEQ…SNSS). A compositionally biased stretch (polar residues) spans 477 to 486 (PAVFSTSSPH). The span at 535–545 (LSEKERMRQHE) shows a compositional bias: basic and acidic residues. Polar residues predominate over residues 560 to 582 (SPVNMTSNQQPFSFFTYQNTNTS).

This sequence belongs to the arrestin family. PalF/RIM8 subfamily.

Required for the proteolytic cleavage of the transcription factor RIM101 in response to alkaline ambient pH. Required for hyphal development. This Candida albicans (strain SC5314 / ATCC MYA-2876) (Yeast) protein is pH-response regulator protein palF/RIM8 (RIM8).